A 691-amino-acid chain; its full sequence is Elongation factor G (691 aa).

One can recognise a tr-type G domain in the interval 8-282 (ERVRNIGIAA…AVVDYLPAPI (275 aa)). GTP-binding positions include 17-24 (AHIDAGKT), 81-85 (DTPGH), and 135-138 (NKMD).

This sequence belongs to the TRAFAC class translation factor GTPase superfamily. Classic translation factor GTPase family. EF-G/EF-2 subfamily.

It localises to the cytoplasm. In terms of biological role, catalyzes the GTP-dependent ribosomal translocation step during translation elongation. During this step, the ribosome changes from the pre-translocational (PRE) to the post-translocational (POST) state as the newly formed A-site-bound peptidyl-tRNA and P-site-bound deacylated tRNA move to the P and E sites, respectively. Catalyzes the coordinated movement of the two tRNA molecules, the mRNA and conformational changes in the ribosome. This Synechococcus sp. (strain CC9902) protein is Elongation factor G.